The primary structure comprises 1036 residues: Beta-galactosidase (1036 aa).

Asn-97 and Asp-197 together coordinate substrate. Asp-197 serves as a coordination point for Na(+). 3 residues coordinate Mg(2+): Glu-411, His-413, and Glu-456. Residues Glu-456 and 532 to 535 each bind substrate; that span reads EYAH. The active-site Proton donor is the Glu-456. The active-site Nucleophile is the Glu-532. Asn-592 contributes to the Mg(2+) binding site. 2 residues coordinate Na(+): Phe-596 and Asp-599. Asp-599 and Trp-1006 together coordinate substrate.

Belongs to the glycosyl hydrolase 2 family. In terms of assembly, homotetramer. The cofactor is Mg(2+). Na(+) is required as a cofactor.

The enzyme catalyses Hydrolysis of terminal non-reducing beta-D-galactose residues in beta-D-galactosides.. This Leuconostoc mesenteroides subsp. mesenteroides (strain ATCC 8293 / DSM 20343 / BCRC 11652 / CCM 1803 / JCM 6124 / NCDO 523 / NBRC 100496 / NCIMB 8023 / NCTC 12954 / NRRL B-1118 / 37Y) protein is Beta-galactosidase.